Consider the following 134-residue polypeptide: Profilin-4 (134 aa).

Cys-13 and Cys-118 are joined by a disulfide. The Involved in PIP2 interaction motif lies at 84–100 (AVIRGKKGSGGITIKKT). At Thr-114 the chain carries Phosphothreonine.

This sequence belongs to the profilin family. As to quaternary structure, occurs in many kinds of cells as a complex with monomeric actin in a 1:1 ratio. In terms of processing, phosphorylated by MAP kinases.

Its subcellular location is the cytoplasm. It localises to the cytoskeleton. Binds to actin and affects the structure of the cytoskeleton. At high concentrations, profilin prevents the polymerization of actin, whereas it enhances it at low concentrations. The protein is Profilin-4 of Olea europaea (Common olive).